The primary structure comprises 1494 residues: Ral GTPase-activating protein subunit beta (1494 aa).

2 disordered regions span residues proline 355 to arginine 437 and glutamate 709 to glutamate 738. Serine 359 is subject to Phosphoserine. Residues threonine 363 and threonine 379 each carry the phosphothreonine modification. Composition is skewed to polar residues over residues serine 369 to proline 381, asparagine 392 to glutamate 428, and asparagine 711 to proline 735. A phosphoserine mark is found at serine 421 and serine 720. Phosphothreonine is present on threonine 734. Residues isoleucine 1149–isoleucine 1392 enclose the Rap-GAP domain. A Phosphoserine modification is found at serine 1285. Residues asparagine 1312–serine 1323 show a composition bias toward polar residues. The interval asparagine 1312–proline 1335 is disordered.

As to quaternary structure, component of the heterodimeric RalGAP1 complex with RALGAPA1 and of the heterodimeric RalGAP2 complex with RALGAPA2. Heterodimerization is required for activity. As to expression, highly expressed in brain, mostly in amygdala.

Its function is as follows. Non-catalytic subunit of the heterodimeric RalGAP1 and RalGAP2 complexes which act as GTPase activators for the Ras-like small GTPases RALA and RALB. The sequence is that of Ral GTPase-activating protein subunit beta (RALGAPB) from Homo sapiens (Human).